Reading from the N-terminus, the 660-residue chain is Chaperone protein DnaK (660 aa).

Threonine 201 is subject to Phosphothreonine; by autocatalysis. The interval 599–660 (EAMQAQSASA…ADVEIVDKPE (62 aa)) is disordered. Positions 600–617 (AMQAQSASAAASSAANAQ) are enriched in low complexity.

Belongs to the heat shock protein 70 family.

Functionally, acts as a chaperone. In Chlamydia trachomatis serovar A (strain ATCC VR-571B / DSM 19440 / HAR-13), this protein is Chaperone protein DnaK.